A 253-amino-acid chain; its full sequence is Sulfate transporter CysZ (253 aa).

4 consecutive transmembrane segments (helical) span residues Phe-31–Phe-51, Leu-72–Phe-92, Ile-151–Trp-171, and Ile-222–Val-242.

It belongs to the CysZ family.

Its subcellular location is the cell inner membrane. High affinity, high specificity proton-dependent sulfate transporter, which mediates sulfate uptake. Provides the sulfur source for the cysteine synthesis pathway. This chain is Sulfate transporter CysZ, found in Salmonella paratyphi A (strain AKU_12601).